The following is a 414-amino-acid chain: Glutamyl-tRNA reductase (414 aa).

Substrate contacts are provided by residues 49–52 (TCNR), Ser108, 113–115 (EPQ), and Gln119. Cys50 (nucleophile) is an active-site residue. 188–193 (GAGQTG) is a binding site for NADP(+).

Belongs to the glutamyl-tRNA reductase family. Homodimer.

The catalysed reaction is (S)-4-amino-5-oxopentanoate + tRNA(Glu) + NADP(+) = L-glutamyl-tRNA(Glu) + NADPH + H(+). Its pathway is porphyrin-containing compound metabolism; protoporphyrin-IX biosynthesis; 5-aminolevulinate from L-glutamyl-tRNA(Glu): step 1/2. Its function is as follows. Catalyzes the NADPH-dependent reduction of glutamyl-tRNA(Glu) to glutamate 1-semialdehyde (GSA). In Francisella tularensis subsp. novicida (strain U112), this protein is Glutamyl-tRNA reductase.